A 435-amino-acid polypeptide reads, in one-letter code: ATP-dependent Clp protease ATP-binding subunit ClpX 3 (435 aa).

The 53-residue stretch at 1–53 (MSSDPPAKTQHCSFCGIEQGRDTPLIAGIEGQICEACVRLAEQVVANWGRKRS) folds into the ClpX-type ZB domain. 4 residues coordinate Zn(2+): Cys-12, Cys-15, Cys-34, and Cys-37. 125–132 (PTGTGKTL) contributes to the ATP binding site.

Belongs to the ClpX chaperone family. Component of the ClpX-ClpP complex. Forms a hexameric ring that, in the presence of ATP, binds to fourteen ClpP subunits assembled into a disk-like structure with a central cavity, resembling the structure of eukaryotic proteasomes.

ATP-dependent specificity component of the Clp protease. It directs the protease to specific substrates. Can perform chaperone functions in the absence of ClpP. The protein is ATP-dependent Clp protease ATP-binding subunit ClpX 3 of Methylococcus capsulatus (strain ATCC 33009 / NCIMB 11132 / Bath).